The following is a 149-amino-acid chain: D-aminoacyl-tRNA deacylase (149 aa).

The Gly-cisPro motif, important for rejection of L-amino acids signature appears at 137–138; that stretch reads GP.

The protein belongs to the DTD family. As to quaternary structure, homodimer.

The protein localises to the cytoplasm. It carries out the reaction glycyl-tRNA(Ala) + H2O = tRNA(Ala) + glycine + H(+). The enzyme catalyses a D-aminoacyl-tRNA + H2O = a tRNA + a D-alpha-amino acid + H(+). An aminoacyl-tRNA editing enzyme that deacylates mischarged D-aminoacyl-tRNAs. Also deacylates mischarged glycyl-tRNA(Ala), protecting cells against glycine mischarging by AlaRS. Acts via tRNA-based rather than protein-based catalysis; rejects L-amino acids rather than detecting D-amino acids in the active site. By recycling D-aminoacyl-tRNA to D-amino acids and free tRNA molecules, this enzyme counteracts the toxicity associated with the formation of D-aminoacyl-tRNA entities in vivo and helps enforce protein L-homochirality. The protein is D-aminoacyl-tRNA deacylase of Clostridium novyi (strain NT).